Reading from the N-terminus, the 318-residue chain is Basic leucine zipper (bZIP) transcription factor atfB (318 aa).

The interval Phe-114–Gln-157 is disordered. Residues Arg-160–Lys-199 form a basic motif region. The 64-residue stretch at Arg-160–His-223 folds into the bZIP domain. The interval Leu-202–Leu-216 is leucine-zipper. The tract at residues Asp-275–Glu-301 is disordered.

This sequence belongs to the bZIP family. ATF subfamily.

It localises to the nucleus. Transcription factor that acts as a key player in the regulatory circuit that integrates secondary metabolism and cellular response to oxidative stress. Regulates the genes involved in development and stress response through direct binding to their promoters. The protein is Basic leucine zipper (bZIP) transcription factor atfB of Aspergillus flavus (strain ATCC 200026 / FGSC A1120 / IAM 13836 / NRRL 3357 / JCM 12722 / SRRC 167).